A 707-amino-acid polypeptide reads, in one-letter code: MGRKQNENEAHGNSAKYDPSFRGPIKNRGCTDIICCVLFLIFILGYIIVGLVAWVYGDPRQVLYPRNSTGAYCGVGDNKDKPYVLYFDILSCAAAINIISIAENGLQCPTPQVCVSSCPLAPWAVEVFQFSKTVGEVYGERRNFCLPAVSPDMIVEESLQKGLCPRFLLPSTPALGRCFPLPNINFTLPEDLRINNTTVSNGISGLLDSINARDVSVKIFEDFAQSWYWILVALGVALALSLLFILLLRLVAAPLVLLLIVGVLAVLAYGIYHCWQQYQVFRDKGASITQLGFTTNFSAYQSVKETWLAALIVLAVLEGILLLMLIFLRQRIRIAIALLKEASRAVGQMMSTMFYPLVTFVLLVICIGYWAVTALYLATSGQPQYIYWASNTSTPGCENVPVNMTCDPMAPLNSSCPNLKCVFKGYSTTGLAQRSLFNLQIYGVLGLFWTVNWVLALGQCVLAGAFASFYWAFHKPRDIPTFPLSSAFIRTLRYHTGSLAFGALILSLVQIARVILEYIDHKLRGSQNPVARCIICCFKCCLWCLEKFIKFLNRNAYIMIAIYGKNFCVSAKNAFMLLMRNVLRVVVLDKVTDLLLFFGKLLVVGGVGVLSFFFFSGRIKGLGKDFENPNLNYYWLPIMTSIMGAYVIASGFFSVFGMCVDTLFLCFLEDLERNDGSQERPYYMPKALLKILGKKNEAPTGGKTRKK.

Over 1-32 (MGRKQNENEAHGNSAKYDPSFRGPIKNRGCTD) the chain is Cytoplasmic. A helical transmembrane segment spans residues 33 to 53 (IICCVLFLIFILGYIIVGLVA). Over 54–227 (WVYGDPRQVL…KIFEDFAQSW (174 aa)) the chain is Extracellular. Asn-67, Asn-185, Asn-195, and Asn-196 each carry an N-linked (GlcNAc...) asparagine glycan. The helical transmembrane segment at 228 to 248 (YWILVALGVALALSLLFILLL) threads the bilayer. Residues 249-250 (RL) are Cytoplasmic-facing. The chain crosses the membrane as a helical span at residues 251–271 (VAAPLVLLLIVGVLAVLAYGI). Residues 272 to 307 (YHCWQQYQVFRDKGASITQLGFTTNFSAYQSVKETW) lie on the Extracellular side of the membrane. Asn-296 carries N-linked (GlcNAc...) asparagine glycosylation. Residues 308 to 328 (LAALIVLAVLEGILLLMLIFL) traverse the membrane as a helical segment. Over 329–356 (RQRIRIAIALLKEASRAVGQMMSTMFYP) the chain is Cytoplasmic. A helical transmembrane segment spans residues 357-377 (LVTFVLLVICIGYWAVTALYL). Over 378-452 (ATSGQPQYIY…GVLGLFWTVN (75 aa)) the chain is Extracellular. N-linked (GlcNAc...) asparagine glycans are attached at residues Asn-391, Asn-403, and Asn-413. The helical transmembrane segment at 453 to 473 (WVLALGQCVLAGAFASFYWAF) threads the bilayer. Residues 474-498 (HKPRDIPTFPLSSAFIRTLRYHTGS) are Cytoplasmic-facing. A helical transmembrane segment spans residues 499-519 (LAFGALILSLVQIARVILEYI). Over 520–557 (DHKLRGSQNPVARCIICCFKCCLWCLEKFIKFLNRNAY) the chain is Extracellular. The chain crosses the membrane as a helical span at residues 558–578 (IMIAIYGKNFCVSAKNAFMLL). At 579–594 (MRNVLRVVVLDKVTDL) the chain is on the cytoplasmic side. The helical transmembrane segment at 595-615 (LLFFGKLLVVGGVGVLSFFFF) threads the bilayer. Over 616 to 635 (SGRIKGLGKDFENPNLNYYW) the chain is Extracellular. The chain crosses the membrane as a helical span at residues 636–656 (LPIMTSIMGAYVIASGFFSVF). The Cytoplasmic segment spans residues 657–707 (GMCVDTLFLCFLEDLERNDGSQERPYYMPKALLKILGKKNEAPTGGKTRKK).

This sequence belongs to the CTL (choline transporter-like) family. Post-translationally, N-glycosylated; N-glycosylation of Asn-67 and Asn-391 is required for a proper thiamine pyrophosphate uptake. In terms of tissue distribution, expressed in colon and cecum.

It localises to the membrane. The protein localises to the apical cell membrane. The enzyme catalyses choline(out) + n H(+)(in) = choline(in) + n H(+)(out). It catalyses the reaction thiamine diphosphate(out) = thiamine diphosphate(in). Functionally, choline transporter that plays a role in the choline-acetylcholine system and is required to the efferent innervation of hair cells in the olivocochlear bundle for the maintenance of physiological function of outer hair cells and the protection of hair cells from acoustic injury. Also described as a thiamine pyrophosphate transporter in colon, may mediate the absorption of microbiota-generated thiamine pyrophosphate and contribute to host thiamine (vitamin B1) homeostasis. The protein is Choline transporter-like protein 4 of Mus musculus (Mouse).